The chain runs to 82 residues: MALSLFTVGQLIFLFWTMRITEASPDPAAKAAPAAAAAPAAAAPDTASDAAAAAALTAANAKAAAELTAANAAAAAAATARG.

Residues 1 to 23 (MALSLFTVGQLIFLFWTMRITEA) form the signal peptide. A propeptide spans 24–44 (SPDPAAKAAPAAAAAPAAAAP) (removed by a dipeptidylpeptidase). Arg-81 carries the post-translational modification Arginine amide.

It belongs to the type-I AFP family. As to expression, detected in liver and in blood serum (at protein level).

Its subcellular location is the secreted. Contributes to protect fish blood from freezing at subzero sea water temperatures. Lowers the blood freezing point. Binds to nascent ice crystals and prevents further growth. The sequence is that of Ice-structuring protein A from Pseudopleuronectes americanus (Winter flounder).